Here is a 611-residue protein sequence, read N- to C-terminus: Probable methyltransferase PMT19 (611 aa).

Topologically, residues 1 to 15 (MNPSQQHLPKLCPKR) are cytoplasmic. Residues 16-36 (LFLFFTPFLLFSLYYILTTIK) traverse the membrane as a helical; Signal-anchor for type II membrane protein segment. At 37 to 611 (TITISSQDRH…TILIVDNSIK (575 aa)) the chain is on the lumenal side. N-linked (GlcNAc...) asparagine glycosylation is found at asparagine 68, asparagine 97, asparagine 289, asparagine 408, asparagine 411, and asparagine 587.

It belongs to the methyltransferase superfamily.

It localises to the endoplasmic reticulum membrane. In Arabidopsis thaliana (Mouse-ear cress), this protein is Probable methyltransferase PMT19.